The primary structure comprises 156 residues: Small ribosomal subunit protein uS7 (156 aa).

This sequence belongs to the universal ribosomal protein uS7 family. As to quaternary structure, part of the 30S ribosomal subunit. Contacts proteins S9 and S11.

Its function is as follows. One of the primary rRNA binding proteins, it binds directly to 16S rRNA where it nucleates assembly of the head domain of the 30S subunit. Is located at the subunit interface close to the decoding center, probably blocks exit of the E-site tRNA. The polypeptide is Small ribosomal subunit protein uS7 (Ralstonia nicotianae (strain ATCC BAA-1114 / GMI1000) (Ralstonia solanacearum)).